The chain runs to 1491 residues: Chromosome partition protein MukB (1491 aa).

34–41 contributes to the ATP binding site; the sequence is GGNGAGKS. 5 coiled-coil regions span residues 302-450, 490-600, 781-806, 836-1109, and 1210-1239; these read LIEQ…LKAE, ARSE…RFES, RAAREQRLELLREERDDVVEQHAKAS, EQAL…DLRT, and VEAIEEMEVELARLTEELTQREQRLAISSD. Residues 667 to 784 are flexible hinge; the sequence is PGGSNDPRLK…AIPLFGRAAR (118 aa). Residues 1059 to 1080 are disordered; it reads QRRRDELQERLHTSRSRKSEYE.

This sequence belongs to the SMC family. MukB subfamily. Homodimerization via its hinge domain. Binds to DNA via its C-terminal region. Interacts, and probably forms a ternary complex, with MukE and MukF via its C-terminal region. The complex formation is stimulated by calcium or magnesium. Interacts with tubulin-related protein FtsZ.

The protein localises to the cytoplasm. It localises to the nucleoid. Functionally, plays a central role in chromosome condensation, segregation and cell cycle progression. Functions as a homodimer, which is essential for chromosome partition. Involved in negative DNA supercoiling in vivo, and by this means organize and compact chromosomes. May achieve or facilitate chromosome segregation by condensation DNA from both sides of a centrally located replisome during cell division. The polypeptide is Chromosome partition protein MukB (Vibrio cholerae serotype O1 (strain ATCC 39315 / El Tor Inaba N16961)).